Here is an 885-residue protein sequence, read N- to C-terminus: Alanine--tRNA ligase (885 aa).

Zn(2+) contacts are provided by histidine 572, histidine 576, cysteine 675, and histidine 679.

Belongs to the class-II aminoacyl-tRNA synthetase family. Zn(2+) is required as a cofactor.

It is found in the cytoplasm. It carries out the reaction tRNA(Ala) + L-alanine + ATP = L-alanyl-tRNA(Ala) + AMP + diphosphate. Its function is as follows. Catalyzes the attachment of alanine to tRNA(Ala) in a two-step reaction: alanine is first activated by ATP to form Ala-AMP and then transferred to the acceptor end of tRNA(Ala). Also edits incorrectly charged Ser-tRNA(Ala) and Gly-tRNA(Ala) via its editing domain. The chain is Alanine--tRNA ligase from Leifsonia xyli subsp. xyli (strain CTCB07).